The sequence spans 248 residues: DNA repair protein RecO (248 aa).

Belongs to the RecO family.

Its function is as follows. Involved in DNA repair and RecF pathway recombination. The protein is DNA repair protein RecO of Bacillus cereus (strain B4264).